We begin with the raw amino-acid sequence, 143 residues long: Small ribosomal subunit protein uS12 (143 aa).

Hydroxyproline is present on Pro-62.

This sequence belongs to the universal ribosomal protein uS12 family. As to quaternary structure, component of the 40S small ribosomal subunit.

The protein resides in the cytoplasm. It is found in the cytosol. It localises to the rough endoplasmic reticulum. The chain is Small ribosomal subunit protein uS12 (RPS23) from Ciona intestinalis (Transparent sea squirt).